Here is a 378-residue protein sequence, read N- to C-terminus: Ribosomal RNA large subunit methyltransferase G (378 aa).

Belongs to the methyltransferase superfamily. RlmG family.

Its subcellular location is the cytoplasm. It carries out the reaction guanosine(1835) in 23S rRNA + S-adenosyl-L-methionine = N(2)-methylguanosine(1835) in 23S rRNA + S-adenosyl-L-homocysteine + H(+). Functionally, specifically methylates the guanine in position 1835 (m2G1835) of 23S rRNA. The polypeptide is Ribosomal RNA large subunit methyltransferase G (Shewanella baltica (strain OS155 / ATCC BAA-1091)).